A 1036-amino-acid chain; its full sequence is Cysteine-rich motor neuron 1 protein (1036 aa).

The signal sequence occupies residues 1–34 (MYLVAGDRGLAGCGHLLVSLLGLLLLLARSGTRA). The region spanning 35–112 (LVCLPCDESK…EYEAGVCEDE (78 aa)) is the IGFBP N-terminal domain. Over 35 to 939 (LVCLPCDESK…HPSEDSSLDS (905 aa)) the chain is Extracellular. 4 disulfides stabilise this stretch: Cys37-Cys60, Cys40-Cys62, Cys45-Cys63, and Cys51-Cys66. Asn71 is a glycosylation site (N-linked (GlcNAc...) asparagine). 2 disulfides stabilise this stretch: Cys74–Cys90 and Cys84–Cys109. N-linked (GlcNAc...) asparagine glycosylation is present at Asn113. The short motif at 314-316 (RGD) is the Cell attachment site element. Residue Asn330 is glycosylated (N-linked (GlcNAc...) asparagine). 2 consecutive VWFC domains span residues 334-391 (PACV…PVCE) and 401-457 (AGCY…PVCE). Antistasin-like domains are found at residues 469–498 (CGEL…TCQC), 505–532 (CSER…ICEC), 539–564 (CRPI…ICRC), and 567–592 (CPEL…ICKC). N-linked (GlcNAc...) asparagine glycosylation is present at Asn474. VWFC domains follow at residues 606–663 (GTCL…PSCA) and 677–735 (SICH…PQCT). Asn746 is a glycosylation site (N-linked (GlcNAc...) asparagine). 2 VWFC domains span residues 751–809 (NYCK…PYCI) and 817–874 (VVCH…PMCP). Residues 940–960 (IASVVVPIIICLSIIIAFLFI) traverse the membrane as a helical segment. Over 961–1036 (NQKKQWIPLL…LQADNFYQTV (76 aa)) the chain is Cytoplasmic. Thr1035 bears the Phosphothreonine mark.

In terms of assembly, interacts with BMP4 and BMP7. In terms of processing, N-glycosylated. As to expression, expressed in pancreas, kidney, skeletal muscle, lung, placenta, brain, heart, spleen, liver and small intestine. Expressed in blood vessels (at protein level).

Its subcellular location is the secreted. It is found in the cell membrane. In terms of biological role, may play a role in CNS development by interacting with growth factors implicated in motor neuron differentiation and survival. May play a role in capillary formation and maintenance during angiogenesis. Modulates BMP activity by affecting its processing and delivery to the cell surface. The protein is Cysteine-rich motor neuron 1 protein (CRIM1) of Homo sapiens (Human).